The following is a 135-amino-acid chain: Small ribosomal subunit protein uS12 (135 aa).

3-methylthioaspartic acid is present on Asp89. The segment at 103–135 (DTAGVKNRMQSRSKYGTKRPKPGQAAAPAGKKR) is disordered. Residues 111-123 (MQSRSKYGTKRPK) are compositionally biased toward basic residues. Residues 124-135 (PGQAAAPAGKKR) show a composition bias toward low complexity.

The protein belongs to the universal ribosomal protein uS12 family. In terms of assembly, part of the 30S ribosomal subunit. Contacts proteins S8 and S17. May interact with IF1 in the 30S initiation complex.

Its function is as follows. With S4 and S5 plays an important role in translational accuracy. Functionally, interacts with and stabilizes bases of the 16S rRNA that are involved in tRNA selection in the A site and with the mRNA backbone. Located at the interface of the 30S and 50S subunits, it traverses the body of the 30S subunit contacting proteins on the other side and probably holding the rRNA structure together. The combined cluster of proteins S8, S12 and S17 appears to hold together the shoulder and platform of the 30S subunit. The sequence is that of Small ribosomal subunit protein uS12 from Gloeobacter violaceus (strain ATCC 29082 / PCC 7421).